The chain runs to 924 residues: Periplasmic nitrate reductase (924 aa).

Residues 1–29 constitute a signal peptide (tat-type signal); the sequence is MNRRDFIKNTAIASACGVAGLSVPSSVLA. A 4Fe-4S Mo/W bis-MGD-type domain is found at 35 to 91; that stretch reads WRWDKAVCRFCGTGCGILVARQDGKIVAVKGDPAAPVNRGLNCIKGYFNAKIMYGED. The [4Fe-4S] cluster site is built by Cys-42, Cys-45, Cys-49, and Cys-77. Mo-bis(molybdopterin guanine dinucleotide) contacts are provided by residues Lys-79, Gln-147, Asn-172, Cys-176, 209–216, Met-417, Gln-421, Asn-527, 552–553, Lys-575, Asp-602, and 814–823; these read WGANMAEM, SD, and TGRVLEHWHS. Position 890 (Trp-890) interacts with substrate. Mo-bis(molybdopterin guanine dinucleotide)-binding residues include Asn-898 and Lys-915.

It belongs to the prokaryotic molybdopterin-containing oxidoreductase family. NasA/NapA/NarB subfamily. As to quaternary structure, component of the periplasmic nitrate reductase NapAB complex composed of NapA and NapB. [4Fe-4S] cluster serves as cofactor. Requires Mo-bis(molybdopterin guanine dinucleotide) as cofactor. Predicted to be exported by the Tat system. The position of the signal peptide cleavage has not been experimentally proven.

It is found in the periplasm. It catalyses the reaction 2 Fe(II)-[cytochrome] + nitrate + 2 H(+) = 2 Fe(III)-[cytochrome] + nitrite + H2O. Catalytic subunit of the periplasmic nitrate reductase complex NapAB. Receives electrons from NapB and catalyzes the reduction of nitrate to nitrite. This chain is Periplasmic nitrate reductase, found in Campylobacter lari (strain RM2100 / D67 / ATCC BAA-1060).